A 66-amino-acid polypeptide reads, in one-letter code: Beta-defensin 107A (66 aa).

The first 22 residues, 1 to 22 (MKIFFFIFAALFLLAQIFQART), serve as a signal peptide directing secretion. 2 disulfides stabilise this stretch: cysteine 37-cysteine 51 and cysteine 41-cysteine 60.

The protein belongs to the beta-defensin family.

Its subcellular location is the secreted. In terms of biological role, has antibacterial activity. This is Beta-defensin 107A (DEFB107A) from Gorilla gorilla gorilla (Western lowland gorilla).